We begin with the raw amino-acid sequence, 640 residues long: 1-deoxy-D-xylulose-5-phosphate synthase (640 aa).

Residues histidine 78 and 119-121 (GHS) each bind thiamine diphosphate. Position 151 (aspartate 151) interacts with Mg(2+). Thiamine diphosphate contacts are provided by residues 152–153 (GA), asparagine 180, tyrosine 289, and glutamate 371. Residue asparagine 180 coordinates Mg(2+).

This sequence belongs to the transketolase family. DXPS subfamily. In terms of assembly, homodimer. Requires Mg(2+) as cofactor. The cofactor is thiamine diphosphate.

It catalyses the reaction D-glyceraldehyde 3-phosphate + pyruvate + H(+) = 1-deoxy-D-xylulose 5-phosphate + CO2. It participates in metabolic intermediate biosynthesis; 1-deoxy-D-xylulose 5-phosphate biosynthesis; 1-deoxy-D-xylulose 5-phosphate from D-glyceraldehyde 3-phosphate and pyruvate: step 1/1. Its function is as follows. Catalyzes the acyloin condensation reaction between C atoms 2 and 3 of pyruvate and glyceraldehyde 3-phosphate to yield 1-deoxy-D-xylulose-5-phosphate (DXP). In Bartonella quintana (strain Toulouse) (Rochalimaea quintana), this protein is 1-deoxy-D-xylulose-5-phosphate synthase.